The sequence spans 261 residues: Cytochrome c oxidase subunit 3 (261 aa).

The Mitochondrial matrix portion of the chain corresponds to 1–15 (MTHQTHAYHMVNPSP). Residues 16–34 (WPLTGALSALLMTSGLIMW) form a helical membrane-spanning segment. The Mitochondrial intermembrane segment spans residues 35–40 (FHFNST). The helical transmembrane segment at 41 to 66 (TLLTLGLTTNMLTMYQWWRDVIREST) threads the bilayer. The Mitochondrial matrix segment spans residues 67–72 (FQGHHT). Residues 73–105 (PTVQKGLRYGMILFIISEVLFFTGFFWAFYHSS) traverse the membrane as a helical segment. At 106–128 (LAPTPELGGCWPPTGIHPLNPLE) the chain is on the mitochondrial intermembrane side. The helical transmembrane segment at 129 to 152 (VPLLNTSVLLASGVSITWAHHSLM) threads the bilayer. Residues 153-155 (EGN) are Mitochondrial matrix-facing. The helical transmembrane segment at 156–183 (RNPMLQALFITIALGIYFTLLQASEYYE) threads the bilayer. At 184 to 190 (APFTISD) the chain is on the mitochondrial intermembrane side. A helical membrane pass occupies residues 191–223 (GVYGSTFFVATGFHGLHVIIGSTFLIVCFFRQL). The Mitochondrial matrix portion of the chain corresponds to 224–232 (KFHFTSNHH). A helical membrane pass occupies residues 233 to 256 (FGFEAAAWYWHFVDVVWLFLYVSI). Topologically, residues 257 to 261 (YWWGS) are mitochondrial intermembrane.

This sequence belongs to the cytochrome c oxidase subunit 3 family. As to quaternary structure, component of the cytochrome c oxidase (complex IV, CIV), a multisubunit enzyme composed of 14 subunits. The complex is composed of a catalytic core of 3 subunits MT-CO1, MT-CO2 and MT-CO3, encoded in the mitochondrial DNA, and 11 supernumerary subunits COX4I, COX5A, COX5B, COX6A, COX6B, COX6C, COX7A, COX7B, COX7C, COX8 and NDUFA4, which are encoded in the nuclear genome. The complex exists as a monomer or a dimer and forms supercomplexes (SCs) in the inner mitochondrial membrane with NADH-ubiquinone oxidoreductase (complex I, CI) and ubiquinol-cytochrome c oxidoreductase (cytochrome b-c1 complex, complex III, CIII), resulting in different assemblies (supercomplex SCI(1)III(2)IV(1) and megacomplex MCI(2)III(2)IV(2)).

It is found in the mitochondrion inner membrane. The catalysed reaction is 4 Fe(II)-[cytochrome c] + O2 + 8 H(+)(in) = 4 Fe(III)-[cytochrome c] + 2 H2O + 4 H(+)(out). Its function is as follows. Component of the cytochrome c oxidase, the last enzyme in the mitochondrial electron transport chain which drives oxidative phosphorylation. The respiratory chain contains 3 multisubunit complexes succinate dehydrogenase (complex II, CII), ubiquinol-cytochrome c oxidoreductase (cytochrome b-c1 complex, complex III, CIII) and cytochrome c oxidase (complex IV, CIV), that cooperate to transfer electrons derived from NADH and succinate to molecular oxygen, creating an electrochemical gradient over the inner membrane that drives transmembrane transport and the ATP synthase. Cytochrome c oxidase is the component of the respiratory chain that catalyzes the reduction of oxygen to water. Electrons originating from reduced cytochrome c in the intermembrane space (IMS) are transferred via the dinuclear copper A center (CU(A)) of subunit 2 and heme A of subunit 1 to the active site in subunit 1, a binuclear center (BNC) formed by heme A3 and copper B (CU(B)). The BNC reduces molecular oxygen to 2 water molecules using 4 electrons from cytochrome c in the IMS and 4 protons from the mitochondrial matrix. The sequence is that of Cytochrome c oxidase subunit 3 (MT-CO3) from Madoqua guentheri (Guenther's dik-dik).